Consider the following 169-residue polypeptide: Endoribonuclease YbeY (169 aa).

Residues H135, H139, and H145 each contribute to the Zn(2+) site.

It belongs to the endoribonuclease YbeY family. Requires Zn(2+) as cofactor.

The protein resides in the cytoplasm. Single strand-specific metallo-endoribonuclease involved in late-stage 70S ribosome quality control and in maturation of the 3' terminus of the 16S rRNA. The protein is Endoribonuclease YbeY of Lachnospira eligens (strain ATCC 27750 / DSM 3376 / VPI C15-48 / C15-B4) (Eubacterium eligens).